Here is a 529-residue protein sequence, read N- to C-terminus: Basal body-orientation factor 1 (529 aa).

Residues 1-13 show a composition bias toward basic residues; that stretch reads MPSKGKDKKKGKS. The interval 1–22 is disordered; it reads MPSKGKDKKKGKSKGKDTKKLI. Coiled-coil stretches lie at residues 85–201 and 271–361; these read LKKQ…EAEK and VKEK…EVER.

The protein belongs to the BBOF1 family. Interacts with MNS1 and ODF2.

It localises to the cytoplasm. Its subcellular location is the cytoskeleton. It is found in the cilium basal body. The protein localises to the flagellum axoneme. Its function is as follows. Plays an essential role in sperm motility and male fertility by stabilizing the sperm flagellar axonemal structure. May be required for the stability of ODF2 and MANS1 proteins. Dispensable for the assembly and function of motile cilia. The protein is Basal body-orientation factor 1 of Homo sapiens (Human).